We begin with the raw amino-acid sequence, 110 residues long: UPF0060 membrane protein Ajs_2087 (110 aa).

Helical transmembrane passes span Leu-7–Trp-27, Ser-33–Leu-53, Ala-63–Val-83, and Gly-86–Ala-106.

Belongs to the UPF0060 family.

Its subcellular location is the cell inner membrane. This is UPF0060 membrane protein Ajs_2087 from Acidovorax sp. (strain JS42).